The primary structure comprises 917 residues: Auxin response factor 17 (917 aa).

The TF-B3 DNA-binding region spans 134 to 236; that stretch reads FCKTLTASDT…QLLLGIRRAN (103 aa). A disordered region spans residues 571 to 649; sequence SVPNALSPFS…RPTAVPVPDP (79 aa). Low complexity-rich tracts occupy residues 576–594 and 604–620; these read LSPF…MTLQ and SYPD…NTST. A PB1 domain is found at 786-870; it reads ATFVKVYKSG…SCIKILSPQE (85 aa).

The protein belongs to the ARF family. In terms of assembly, homodimers and heterodimers.

The protein resides in the nucleus. In terms of biological role, auxin response factors (ARFs) are transcriptional factors that bind specifically to the DNA sequence 5'-TGTCTC-3' found in the auxin-responsive promoter elements (AuxREs). The protein is Auxin response factor 17 (ARF17) of Oryza sativa subsp. indica (Rice).